Reading from the N-terminus, the 262-residue chain is 5'-nucleotidase SurE (262 aa).

4 residues coordinate a divalent metal cation: Asp11, Asp12, Ser43, and Asn101.

This sequence belongs to the SurE nucleotidase family. A divalent metal cation serves as cofactor.

The protein resides in the cytoplasm. It carries out the reaction a ribonucleoside 5'-phosphate + H2O = a ribonucleoside + phosphate. Nucleotidase that shows phosphatase activity on nucleoside 5'-monophosphates. The sequence is that of 5'-nucleotidase SurE from Prochlorococcus marinus (strain NATL1A).